The chain runs to 356 residues: Nucleosome assembly protein 1;4 (356 aa).

The stretch at 34-88 (VNALKNKLQNLAGQHSDILETLTPQVRKRVDVLRELQSQHDELESHFFEERAALE) forms a coiled coil. Residues 55 to 70 (LTPQVRKRVDVLRELQ) carry the Nuclear export signal motif. Residues 230-235 (KKKPKK) carry the Nuclear localization signal motif. The disordered stretch occupies residues 304–356 (FTGEAAEGDEFEDIEDDDDDDDDDDDEDDEDEEDEDDEEEEKSKKKSSALKVE). The span at 309 to 343 (AEGDEFEDIEDDDDDDDDDDDEDDEDEEDEDDEEE) shows a compositional bias: acidic residues. Basic residues predominate over residues 347 to 356 (KKKSSALKVE).

Belongs to the nucleosome assembly protein (NAP) family. In terms of assembly, can form homomeric and heteromeric protein complexes with NAP1;3. Binds histones H2A and H2B in vivo. Also able to bind histones H1 and H4 in vitro. Interacts with CYCB1;1 and with alpha tubulin.

It is found in the nucleus. The protein localises to the cytoplasm. Functionally, may modulate chromatin structure by regulation of nucleosome assembly/disassembly. Could function together with B-type cyclins in the regulation of microtubule dynamics. In Nicotiana tabacum (Common tobacco), this protein is Nucleosome assembly protein 1;4 (NAP1;4).